A 31-amino-acid chain; its full sequence is Cytochrome b6-f complex subunit 6 (31 aa).

The helical transmembrane segment at 7–25 threads the bilayer; the sequence is YSGFLLAAPIPASAPFTGL.

This sequence belongs to the PetL family. As to quaternary structure, the 4 large subunits of the cytochrome b6-f complex are cytochrome b6, subunit IV (17 kDa polypeptide, PetD), cytochrome f and the Rieske protein, while the 4 small subunits are PetG, PetL, PetM and PetN. The complex functions as a dimer.

The protein localises to the plastid. Its subcellular location is the chloroplast thylakoid membrane. Component of the cytochrome b6-f complex, which mediates electron transfer between photosystem II (PSII) and photosystem I (PSI), cyclic electron flow around PSI, and state transitions. PetL is important for photoautotrophic growth as well as for electron transfer efficiency and stability of the cytochrome b6-f complex. This Huperzia lucidula (Shining clubmoss) protein is Cytochrome b6-f complex subunit 6.